The primary structure comprises 836 residues: Probable ribonuclease ZC3H12B (836 aa).

The segment at 1 to 92 (MTATAEVETP…SPCLDRPSFS (92 aa)) is disordered. Basic and acidic residues predominate over residues 8–28 (ETPKMEKSASKEEKQQPKQDS). Over residues 35–46 (DSEEWMSSESDP) the composition is skewed to acidic residues. A compositionally biased stretch (polar residues) spans 50–60 (SLKSSDNSKSC). Basic residues predominate over residues 70-80 (KEMHSKPHRQL). The region spanning 190–345 (LRPVVIDGSN…LGRHGPSLEN (156 aa)) is the RNase NYN domain. The C3H1-type zinc finger occupies 355–380 (EHKKQPCPYGKKCTYGHKCKYYHPER).

This sequence belongs to the ZC3H12 family. Mg(2+) is required as a cofactor.

In terms of biological role, may function as RNase and regulate the levels of target RNA species. The chain is Probable ribonuclease ZC3H12B (ZC3H12B) from Homo sapiens (Human).